The primary structure comprises 1609 residues: Probable cation-transporting ATPase I (1609 aa).

10 consecutive transmembrane segments (helical) span residues 30-50 (GAVN…WPVV), 176-196 (LAIL…SAAV), 238-258 (IALS…GTPL), 357-377 (LIAA…AGAI), 641-661 (VHLA…ASAG), 673-693 (WFSP…VSAS), 778-798 (ILAV…ALLV), 921-941 (LFEG…ATGV), 969-989 (TSKV…LALL), and 997-1017 (AVAD…PLVA). Catalysis depends on Asp-1053, which acts as the 4-aspartylphosphate intermediate. 2 residues coordinate Mg(2+): Asp-1335 and Asp-1339. 2 helical membrane passes run 1396 to 1416 (ILVG…VFGA) and 1426 to 1446 (LLLV…VTSQ). A disordered region spans residues 1447-1476 (YEEPGEDEYQTDEEADEARRTHQHEVLTGP). Residues 1449-1462 (EPGEDEYQTDEEAD) are compositionally biased toward acidic residues. The next 2 membrane-spanning stretches (helical) occupy residues 1542 to 1562 (VVAT…TPVI) and 1573 to 1593 (PIAW…SVLA).

It belongs to the cation transport ATPase (P-type) (TC 3.A.3) family.

It is found in the cell membrane. The catalysed reaction is ATP + H2O = ADP + phosphate + H(+). This Mycobacterium leprae (strain TN) protein is Probable cation-transporting ATPase I (ctpI).